The primary structure comprises 492 residues: Bifunctional purine biosynthesis protein PurH (492 aa).

Residues 1-144 (MKKAILSVSN…KNFKHVITVV (144 aa)) form the MGS-like domain.

Belongs to the PurH family.

The enzyme catalyses (6R)-10-formyltetrahydrofolate + 5-amino-1-(5-phospho-beta-D-ribosyl)imidazole-4-carboxamide = 5-formamido-1-(5-phospho-D-ribosyl)imidazole-4-carboxamide + (6S)-5,6,7,8-tetrahydrofolate. It carries out the reaction IMP + H2O = 5-formamido-1-(5-phospho-D-ribosyl)imidazole-4-carboxamide. It participates in purine metabolism; IMP biosynthesis via de novo pathway; 5-formamido-1-(5-phospho-D-ribosyl)imidazole-4-carboxamide from 5-amino-1-(5-phospho-D-ribosyl)imidazole-4-carboxamide (10-formyl THF route): step 1/1. It functions in the pathway purine metabolism; IMP biosynthesis via de novo pathway; IMP from 5-formamido-1-(5-phospho-D-ribosyl)imidazole-4-carboxamide: step 1/1. The sequence is that of Bifunctional purine biosynthesis protein PurH from Staphylococcus saprophyticus subsp. saprophyticus (strain ATCC 15305 / DSM 20229 / NCIMB 8711 / NCTC 7292 / S-41).